The following is a 358-amino-acid chain: Gentisate 1,2-dioxygenase (358 aa).

Residues 239–358 (QTLRQRAEND…AFNFYAEAEP (120 aa)) form the Cupin type-1 domain.

This sequence belongs to the gentisate 1,2-dioxygenase family. Homotetramer.

The catalysed reaction is 2,5-dihydroxybenzoate + O2 = 3-maleylpyruvate + H(+). Its pathway is aromatic compound metabolism; naphthalene degradation. Its activity is regulated as follows. Inhibited by 2,2'-dipyridyl. Functionally, catalyzes the oxygen-dependent ring fission of gentisate between the carboxyl and proximal hydroxyl groups at positions 1 and 2 of the aromatic ring to form maleylpyruvate. No activity with cathechol and protecatechuate as substrates. Part of a 3-hydroxybenzoic acid-degradation pathway. This Haloferax sp protein is Gentisate 1,2-dioxygenase (gdoA).